A 175-amino-acid polypeptide reads, in one-letter code: Bifunctional protein PyrR (175 aa).

Positions 98 to 110 (VIIIDDVLYTGRT) match the PRPP-binding motif.

The protein belongs to the purine/pyrimidine phosphoribosyltransferase family. PyrR subfamily. Homodimer and homohexamer; in equilibrium.

It catalyses the reaction UMP + diphosphate = 5-phospho-alpha-D-ribose 1-diphosphate + uracil. Its function is as follows. Regulates transcriptional attenuation of the pyrimidine nucleotide (pyr) operon by binding in a uridine-dependent manner to specific sites on pyr mRNA. This disrupts an antiterminator hairpin in the RNA and favors formation of a downstream transcription terminator, leading to a reduced expression of downstream genes. Also displays a weak uracil phosphoribosyltransferase activity which is not physiologically significant. This chain is Bifunctional protein PyrR, found in Staphylococcus carnosus (strain TM300).